Reading from the N-terminus, the 989-residue chain is Voltage-gated delayed rectifier potassium channel KCNH1 (989 aa).

At 1–220 (MTMAGGRRGL…LHYCVFKTTW (220 aa)) the chain is on the cytoplasmic side. The PAS domain maps to 14–94 (QNTFLENIVR…QTFENYEMNS (81 aa)). A PAC domain is found at 93–145 (NSFEILMYKKNRTPVWFFVKIAPIRNEQDKVVLFLCTFSDITAFKQPIEDDSC). A required for phosphatidylinositol bisphosphate binding region spans residues 151 to 162 (FARLTRALTSSR). The chain crosses the membrane as a helical span at residues 221 to 241 (DWIILILTFYTAILVPYNVSF). At 242–248 (KTRQNNV) the chain is on the extracellular side. A helical transmembrane segment spans residues 249–269 (AWLVVDSIVDVIFLVDIVLNF). Topologically, residues 270–290 (HTTFVGPAGEVISDPKLIRMN) are cytoplasmic. Residues 291–309 (YLKTWFVIDLLSCLPYDVI) traverse the membrane as a helical segment. Residues 310-345 (NAFENVDEVSAFMGDPGKIGFADQIPPPLEGRESQG) are Extracellular-facing. Residues 346–368 (ISSLFSSLKVVRLLRLGRVARKL) traverse the membrane as a helical; Voltage-sensor segment. The Cytoplasmic segment spans residues 369–377 (DHYIEYGAA). The chain crosses the membrane as a helical span at residues 378-399 (VLVLLVCVFGLAAHWMACIWYS). The Extracellular portion of the chain corresponds to 400–448 (IGDYEIFDEDTKTIRNNSWLYQLAMDIGTPYQFNGSGSGKWEGGPSKNS). N-linked (GlcNAc...) asparagine glycosylation is found at N415 and N433. Residues 449 to 470 (VYISSLYFTMTSLTSVGFGNIA) constitute an intramembrane region (pore-forming). The Selectivity filter motif lies at 463–468 (SVGFGN). Over 471–477 (PSTDIEK) the chain is Extracellular. A helical transmembrane segment spans residues 478–498 (IFAVAIMMIGSLLYATIFGNV). The Cytoplasmic segment spans residues 499 to 989 (TTIFQQMYAN…ESERDIFGAS (491 aa)). Residues 673–770 (KRDALQKVLE…LDDLDVEKGN (98 aa)) are calmodulin-binding. The interaction with cyclic nucleotide-binding pocket stretch occupies residues 699 to 701 (YNL). Basic and acidic residues predominate over residues 855 to 879 (KAESMETLPERTKASGEATLKKTDS). 2 disordered regions span residues 855–886 (KAES…GITK) and 962–989 (RSSQ…FGAS). Positions 924–964 (ATVLEVRHELKEDIKALNAKMTNIEKQLSEILRILTSRRSS) are CAD (involved in subunit assembly). 3 positions are modified to phosphoserine: S974, S978, and S981. Residues 980–989 (ESERDIFGAS) show a composition bias toward basic and acidic residues.

This sequence belongs to the potassium channel family. H (Eag) (TC 1.A.1.20) subfamily. Kv10.1/KCNH1 sub-subfamily. In terms of assembly, homomultimer. The potassium channel is composed of a homo- or heterotetrameric complex of pore-forming alpha subunits that can associate with modulating beta subunits. Heteromultimer with KCNH5/EAG2. Interacts with ALG10B. Interacts with RABEP1. Interacts (via C-terminus) with CTTN. Interacts (via C-terminal cytoplasmic region) with Ca(2+)-bound calmodulin. Interacts with the spider kappa-theraphotoxin-Aa1a and mu/kappa-theraphotoxin-Ap1a. Post-translationally, channel activity is regulated via tyrosine phosphorylation/dephosphorylation by SRC and PTPN6. In terms of tissue distribution, highly expressed in brain and in myoblasts at the onset of fusion, but not in other tissues. Detected in HeLa (cervical carcinoma), SH-SY5Y (neuroblastoma) and MCF-7 (epithelial tumor) cells, but not in normal epithelial cells.

It localises to the cell membrane. The protein localises to the nucleus inner membrane. The protein resides in the cell projection. Its subcellular location is the dendrite. It is found in the axon. It localises to the presynaptic cell membrane. The protein localises to the perikaryon. The protein resides in the postsynaptic density membrane. Its subcellular location is the early endosome membrane. It catalyses the reaction K(+)(in) = K(+)(out). With respect to regulation, channel activity is inhibited by interaction with Ca(2+)-bound calmodulin. Interaction of a single pore-forming alpha subunit with a calmodulin chain is sufficient to promote channel closure. Channel activity is not regulated by cyclic nucleotides. Channel activity is inhibited by binding intracellular phosphatidylinositol-3,5-bisphosphate and phosphatidylinositol-4,5-bisphosphate (PIP2), but is not inhibited by phosphatidylinositol 4-phosphate. Inhibited by the spider kappa-theraphotoxin-Aa1a and mu/kappa-theraphotoxin-Ap1a. Its function is as follows. Pore-forming (alpha) subunit of a voltage-gated delayed rectifier potassium channel that mediates outward-rectifying potassium currents which, on depolarization, reaches a steady-state level and do not inactivate. The activation kinetics depend on the prepulse potential and external divalent cation concentration. With negative prepulses, the current activation is delayed and slowed down several fold, whereas more positive prepulses speed up activation. The time course of activation is biphasic with a fast and a slowly activating current component. Activates at more positive membrane potentials and exhibit a steeper activation curve. Channel properties are modulated by subunit assembly. Mediates IK(NI) current in myoblasts. Involved in the regulation of cell proliferation and differentiation, in particular adipogenic and osteogenic differentiation in bone marrow-derived mesenchymal stem cells (MSCs). The chain is Voltage-gated delayed rectifier potassium channel KCNH1 from Homo sapiens (Human).